Here is a 366-residue protein sequence, read N- to C-terminus: UDP-N-acetylglucosamine--N-acetylmuramyl-(pentapeptide) pyrophosphoryl-undecaprenol N-acetylglucosamine transferase (366 aa).

Residues 10–12 (TGG), asparagine 124, arginine 165, serine 192, isoleucine 247, and glutamine 292 contribute to the UDP-N-acetyl-alpha-D-glucosamine site.

This sequence belongs to the glycosyltransferase 28 family. MurG subfamily.

The protein resides in the cell inner membrane. It carries out the reaction di-trans,octa-cis-undecaprenyl diphospho-N-acetyl-alpha-D-muramoyl-L-alanyl-D-glutamyl-meso-2,6-diaminopimeloyl-D-alanyl-D-alanine + UDP-N-acetyl-alpha-D-glucosamine = di-trans,octa-cis-undecaprenyl diphospho-[N-acetyl-alpha-D-glucosaminyl-(1-&gt;4)]-N-acetyl-alpha-D-muramoyl-L-alanyl-D-glutamyl-meso-2,6-diaminopimeloyl-D-alanyl-D-alanine + UDP + H(+). It participates in cell wall biogenesis; peptidoglycan biosynthesis. Its function is as follows. Cell wall formation. Catalyzes the transfer of a GlcNAc subunit on undecaprenyl-pyrophosphoryl-MurNAc-pentapeptide (lipid intermediate I) to form undecaprenyl-pyrophosphoryl-MurNAc-(pentapeptide)GlcNAc (lipid intermediate II). This is UDP-N-acetylglucosamine--N-acetylmuramyl-(pentapeptide) pyrophosphoryl-undecaprenol N-acetylglucosamine transferase from Geotalea daltonii (strain DSM 22248 / JCM 15807 / FRC-32) (Geobacter daltonii).